A 197-amino-acid chain; its full sequence is Imidazoleglycerol-phosphate dehydratase (197 aa).

This sequence belongs to the imidazoleglycerol-phosphate dehydratase family.

It is found in the cytoplasm. The enzyme catalyses D-erythro-1-(imidazol-4-yl)glycerol 3-phosphate = 3-(imidazol-4-yl)-2-oxopropyl phosphate + H2O. Its pathway is amino-acid biosynthesis; L-histidine biosynthesis; L-histidine from 5-phospho-alpha-D-ribose 1-diphosphate: step 6/9. This Pseudomonas putida (strain GB-1) protein is Imidazoleglycerol-phosphate dehydratase.